The primary structure comprises 573 residues: Solute carrier family 41 member 2 (573 aa).

Topologically, residues 1–162 (MTNCKGRSTI…KESSSIMALQ (162 aa)) are extracellular. Residues 163-183 (ILVPFLLAGFGTVTAGMVLDI) form a helical membrane-spanning segment. Residues 184–195 (VQHWDVFKNVTE) are Cytoplasmic-facing. The helical transmembrane segment at 196-216 (VFILVPALLGLKGNLEMTLAS) threads the bilayer. Residues 217-245 (RLSTAVNIGKMDSPIEKWNLIIGNLALKQ) lie on the Extracellular side of the membrane. A helical membrane pass occupies residues 246 to 266 (VQATVVGFLAAVAAVILGWIP). Over 267–282 (EGKYSFSHSILLCSSS) the chain is Cytoplasmic. The chain crosses the membrane as a helical span at residues 283-303 (VATAFIASLLQGIIMVGVIVG). Residues 304–313 (SKKTGINPDN) are Extracellular-facing. Residues 314–334 (VATPIAASFGDLITLAILAWI) traverse the membrane as a helical segment. Topologically, residues 335–347 (SQGLYTCLETYYY) are cytoplasmic. A helical transmembrane segment spans residues 348-368 (VSPLVGAFFLALTPMGIVIAA). Topologically, residues 369–376 (KHPATRTV) are extracellular. The helical transmembrane segment at 377 to 397 (LHSGWEPVITAMIISSIGGLI) threads the bilayer. Residues 398 to 406 (LDTTVSDPN) are Cytoplasmic-facing. Residues 407–427 (LVGIVVYTPVINGIGGNLVAI) form a helical membrane-spanning segment. Residues 428-469 (QASRISTYLHLHSIPGELPEEAKGCYYPCRTYYGTGVNNKSA) are Extracellular-facing. Residues 470 to 490 (QVLLLLVIPGHLIFLYTIHLM) form a helical membrane-spanning segment. The Cytoplasmic segment spans residues 491–499 (KSGHTSLTP). Residues 500 to 520 (IFIAVYLFAALLQVFTLLWIA) form a helical membrane-spanning segment. The Extracellular portion of the chain corresponds to 521–543 (DWMVHHFWKKGKDPDSFSIPYLT). The chain crosses the membrane as a helical span at residues 544–564 (ALGDLLGTALLAVGFHFLWLI). The Cytoplasmic segment spans residues 565-573 (GDRDGDVGD).

The protein belongs to the SLC41A transporter family.

The protein localises to the cell membrane. It carries out the reaction Mg(2+)(in) = Mg(2+)(out). It catalyses the reaction Mn(2+)(in) = Mn(2+)(out). The enzyme catalyses Co(2+)(in) = Co(2+)(out). The catalysed reaction is Ni(2+)(in) = Ni(2+)(out). It carries out the reaction Fe(2+)(in) = Fe(2+)(out). Functionally, acts as a plasma-membrane magnesium transporter. Can also mediate the transport of other divalent metal cations in an order of Ba(2+) &gt; Ni(2+) &gt; Co(2+) &gt; Fe(2+) &gt; Mn(2+). The sequence is that of Solute carrier family 41 member 2 (SLC41A2) from Gallus gallus (Chicken).